A 362-amino-acid chain; its full sequence is Protein RecA (362 aa).

ATP is bound at residue 77–84 (GPESSGKT).

The protein belongs to the RecA family.

Its subcellular location is the cytoplasm. Can catalyze the hydrolysis of ATP in the presence of single-stranded DNA, the ATP-dependent uptake of single-stranded DNA by duplex DNA, and the ATP-dependent hybridization of homologous single-stranded DNAs. It interacts with LexA causing its activation and leading to its autocatalytic cleavage. In Rhizobium etli (strain CIAT 652), this protein is Protein RecA.